Consider the following 286-residue polypeptide: Nucleotide-binding protein Tgr7_0722 (286 aa).

8–15 (GLSGSGKS) provides a ligand contact to ATP. Residue 60–63 (DVRS) participates in GTP binding.

Belongs to the RapZ-like family.

Its function is as follows. Displays ATPase and GTPase activities. This is Nucleotide-binding protein Tgr7_0722 from Thioalkalivibrio sulfidiphilus (strain HL-EbGR7).